The following is a 1295-amino-acid chain: Protein glp-1 (1295 aa).

An N-terminal signal peptide occupies residues 1–15; the sequence is MRVLLILLAFFAPIA. Topologically, residues 16-764 are extracellular; that stretch reads SQLMGGECGR…NEIDEGWSRS (749 aa). EGF-like domains follow at residues 19 to 58, 117 to 152, 154 to 190, and 190 to 230; these read MGGECGREGACSVNGKCYNGKLIETYWCRCKKGFGGAFCE, GVNPCDSDPCNNGLCYPFYGGFQCICNNGYGGSYCE, GIDHCAQNECAEGSTCVNSVYNYYCDCPIGKSGRYCE, and ERTE…EFCN. Intrachain disulfides connect cysteine 23–cysteine 35, cysteine 29–cysteine 46, cysteine 48–cysteine 57, cysteine 121–cysteine 131, cysteine 126–cysteine 140, cysteine 142–cysteine 151, cysteine 158–cysteine 169, cysteine 163–cysteine 178, cysteine 180–cysteine 189, cysteine 201–cysteine 206, cysteine 220–cysteine 229, cysteine 236–cysteine 248, cysteine 242–cysteine 257, cysteine 259–cysteine 268, cysteine 275–cysteine 286, cysteine 280–cysteine 296, cysteine 298–cysteine 307, cysteine 329–cysteine 342, cysteine 336–cysteine 347, cysteine 349–cysteine 358, cysteine 373–cysteine 384, cysteine 378–cysteine 394, cysteine 396–cysteine 405, cysteine 411–cysteine 422, cysteine 416–cysteine 431, cysteine 433–cysteine 442, cysteine 450–cysteine 461, cysteine 455–cysteine 467, cysteine 469–cysteine 478, cysteine 496–cysteine 519, cysteine 501–cysteine 514, cysteine 510–cysteine 526, cysteine 536–cysteine 560, cysteine 542–cysteine 555, cysteine 551–cysteine 567, cysteine 582–cysteine 595, and cysteine 591–cysteine 607. An EGF-like 5; calcium-binding domain is found at 232–269; sequence DKNECLIEETCVNNSTCFNLHGDFTCTCKPGYAGKYCE. N-linked (GlcNAc...) asparagine glycosylation is found at asparagine 244 and asparagine 245. 5 consecutive EGF-like domains span residues 271-308, 316-359, 369-406, 407-443, and 446-479; these read AIDMCKDYVCQNDGYCAHDSNQMPICYCEQGFTGQRCE, GGIH…DRCE, DIQSCKYNPCVNNATCIDLKNSGYSCHCPLGFYGLNCE, QHLLCTPTTCANGGTCEGVNGVIRCNCPNGFSGDYCE, and DRQLCSRHPCKNGGVCKNTGYCECQYGYTGPTCE. The N-linked (GlcNAc...) asparagine glycan is linked to asparagine 333. A glycan (N-linked (GlcNAc...) asparagine) is linked at asparagine 381. LNR repeat units lie at residues 496–532, 536–577, and 581–612; these read CEQRKCMDLASNGICNPECNLEECNFDGGDCSGGQRP, CQYP…CPAH, and HCIERRGDGVCNLECSFIGCGFDGGDCNNGTE. N-linked (GlcNAc...) asparagine glycosylation is found at asparagine 609 and asparagine 675. Residues 765–786 traverse the membrane as a helical segment; the sequence is QVILFACIAFLAFGTVVAGVIA. The Cytoplasmic portion of the chain corresponds to 787–1295; that stretch reads KNGPERSRKR…AEQMNGSFYC (509 aa). 5 ANK repeats span residues 961–990, 994–1023, 1030–1062, 1074–1103, and 1107–1136; these read DENTALMLAVRAHRVRLSVVLLREGANPTI, SERSALHEAVVNKDLRILRHLLTDKRLLKE, NGMTALMLVARELGKHQVEMAELLLSKGAKLDY, KGRTALHYAAMHDNEEMVIMLVRRSSNKDK, and DGRTPIMLAAKEGCEKTVQYLALNDASLGI. Residues 1177–1244 are disordered; sequence IVKSGHGAKS…TTSTPNRMET (68 aa). Residues 1201-1210 are compositionally biased toward polar residues; the sequence is KTPTSAASSR. Over residues 1221–1239 the composition is skewed to low complexity; that stretch reads DGSFSSPSPHYYPTTTSTP.

In terms of assembly, interacts with sel-10. As to quaternary structure, when activated, the glp-1/Notch intracellular domain (NICD) may become a component of a complex consisting of at least the NICD, lag-1 and lag-3. Upon binding its ligands, it is cleaved (S2 cleavage) in its extracellular domain, close to the transmembrane domain. S2 cleavage is probably mediated by the metalloproteases adm-4 and sup-17. It is then cleaved (S3 cleavage) downstream of its transmembrane domain, releasing it from the cell membrane; S3 cleavage requires a multiprotein gamma-secretase complex, which may include presenilin sel-12. As to expression, expressed in the distal mitotic region of the germ line. May be absent from the gonadal distal tip cell (DTC).

It is found in the cell membrane. The protein localises to the cell projection. It localises to the axon. The protein resides in the nucleus. Its function is as follows. Essential signaling protein which has a major role in germline and embryonic development; involved in cell fate decisions that require cell-cell interactions. Probable membrane-bound receptor for putative ligands lag-2 and apx-1. Upon ligand activation, and releasing from the cell membrane, the glp-1/Notch intracellular domain (NICD) probably forms a transcriptional activator complex with lag-1 and lag-3 and regulates expression of various genes; targets in the germline include lst-1 and sygl-1. Involved in the specification of the cell fates of the blastomeres, ABa and ABp. Proper signaling by glp-1 induces ABa descendants to produce anterior pharyngeal cells, and ABp descendants to adopt a different fate. Contributes to the establishment of the dorsal-ventral axis in early embryos. Required in postmitotic neurons in order to maintain the developmentally arrested larval state known as dauer, probably in response to lag-2. Regulates germ cell mitotic proliferation probably by regulating MAP kinase phosphatase lip-1 expression. Required for oocyte growth control. Plays a negative role in lifespan. In Caenorhabditis elegans, this protein is Protein glp-1.